An 86-amino-acid polypeptide reads, in one-letter code: MGLFDFLKAKKTTAETAKNRLQIIIAQERSNRGGPDYLPLLQRELLEVIKKYVNIDVDAVKVDLVKDGQHDVLDISVALPEGPDKP.

Belongs to the MinE family.

Prevents the cell division inhibition by proteins MinC and MinD at internal division sites while permitting inhibition at polar sites. This ensures cell division at the proper site by restricting the formation of a division septum at the midpoint of the long axis of the cell. The protein is Cell division topological specificity factor of Stenotrophomonas maltophilia (strain R551-3).